The primary structure comprises 429 residues: Glutamate-1-semialdehyde 2,1-aminomutase (429 aa).

Position 267 is an N6-(pyridoxal phosphate)lysine (Lys-267).

This sequence belongs to the class-III pyridoxal-phosphate-dependent aminotransferase family. HemL subfamily. In terms of assembly, homodimer. The cofactor is pyridoxal 5'-phosphate.

It localises to the cytoplasm. The catalysed reaction is (S)-4-amino-5-oxopentanoate = 5-aminolevulinate. The protein operates within porphyrin-containing compound metabolism; protoporphyrin-IX biosynthesis; 5-aminolevulinate from L-glutamyl-tRNA(Glu): step 2/2. The protein is Glutamate-1-semialdehyde 2,1-aminomutase of Stenotrophomonas maltophilia (strain R551-3).